A 181-amino-acid chain; its full sequence is Oligoribonuclease (181 aa).

The 164-residue stretch at 8 to 171 (LIWVDLEMTG…EDIKESIAEM (164 aa)) folds into the Exonuclease domain. Y129 is an active-site residue.

It belongs to the oligoribonuclease family.

The protein resides in the cytoplasm. In terms of biological role, 3'-to-5' exoribonuclease specific for small oligoribonucleotides. The protein is Oligoribonuclease of Shewanella frigidimarina (strain NCIMB 400).